A 204-amino-acid chain; its full sequence is Holliday junction branch migration complex subunit RuvA (204 aa).

Residues M1–L64 form a domain I region. The tract at residues D65–A143 is domain II. A flexible linker region spans residues G144–S151. A domain III region spans residues S151 to L204.

The protein belongs to the RuvA family. As to quaternary structure, homotetramer. Forms an RuvA(8)-RuvB(12)-Holliday junction (HJ) complex. HJ DNA is sandwiched between 2 RuvA tetramers; dsDNA enters through RuvA and exits via RuvB. An RuvB hexamer assembles on each DNA strand where it exits the tetramer. Each RuvB hexamer is contacted by two RuvA subunits (via domain III) on 2 adjacent RuvB subunits; this complex drives branch migration. In the full resolvosome a probable DNA-RuvA(4)-RuvB(12)-RuvC(2) complex forms which resolves the HJ.

It localises to the cytoplasm. Functionally, the RuvA-RuvB-RuvC complex processes Holliday junction (HJ) DNA during genetic recombination and DNA repair, while the RuvA-RuvB complex plays an important role in the rescue of blocked DNA replication forks via replication fork reversal (RFR). RuvA specifically binds to HJ cruciform DNA, conferring on it an open structure. The RuvB hexamer acts as an ATP-dependent pump, pulling dsDNA into and through the RuvAB complex. HJ branch migration allows RuvC to scan DNA until it finds its consensus sequence, where it cleaves and resolves the cruciform DNA. This Chlorobaculum parvum (strain DSM 263 / NCIMB 8327) (Chlorobium vibrioforme subsp. thiosulfatophilum) protein is Holliday junction branch migration complex subunit RuvA.